Here is a 290-residue protein sequence, read N- to C-terminus: Syntaxin-2 (290 aa).

The Cytoplasmic portion of the chain corresponds to 1–266 (MRDRLPDLTA…KYQSKARRKK (266 aa)). The residue at position 14 (Ser14) is a Phosphoserine. Positions 69–106 (EGKIKEELEDLNKEIKKTANRIRGKLKAIEQSCDQDEN) form a coiled coil. Residues 193–255 (LNEIESRHKD…EHAKEETKKA (63 aa)) enclose the t-SNARE coiled-coil homology domain. A helical; Anchor for type IV membrane protein membrane pass occupies residues 267-290 (WIIAAVVVAVIAVLALIIGLTVGK).

Belongs to the syntaxin family. Interacts with SYT6 and SYT8; the interaction is Ca(2+)-dependent. Heart, spleen, liver, and testis.

The protein localises to the membrane. Functionally, essential for epithelial morphogenesis. May mediate Ca(2+)-regulation of exocytosis acrosomal reaction in sperm. The chain is Syntaxin-2 (Stx2) from Rattus norvegicus (Rat).